Consider the following 117-residue polypeptide: Large ribosomal subunit protein uL24 (117 aa).

Basic residues predominate over residues 1–10; the sequence is MSKQPRKQRK. Residues 1–28 form a disordered region; that stretch reads MSKQPRKQRKALYTAPLHKRHNSMSVHL.

It belongs to the universal ribosomal protein uL24 family. Part of the 50S ribosomal subunit.

One of two assembly initiator proteins, it binds directly to the 5'-end of the 23S rRNA, where it nucleates assembly of the 50S subunit. Its function is as follows. Located at the polypeptide exit tunnel on the outside of the subunit. The sequence is that of Large ribosomal subunit protein uL24 from Methanosphaera stadtmanae (strain ATCC 43021 / DSM 3091 / JCM 11832 / MCB-3).